The sequence spans 2397 residues: Cell wall alpha-1,3-glucan synthase mok11 (2397 aa).

A disordered region spans residues 1683-1705 (SNQQSFDFKSSESDSFPQKSPSV). Residues 1687–1698 (SFDFKSSESDSF) show a composition bias toward low complexity.

It belongs to the glycosyltransferase group 1 family.

It catalyses the reaction [(1-&gt;3)-alpha-D-glucosyl](n) + UDP-alpha-D-glucose = [(1-&gt;3)-alpha-D-glucosyl](n+1) + UDP + H(+). The polypeptide is Cell wall alpha-1,3-glucan synthase mok11 (mok11) (Schizosaccharomyces pombe (strain 972 / ATCC 24843) (Fission yeast)).